The primary structure comprises 116 residues: NADH-ubiquinone oxidoreductase chain 3 (116 aa).

Helical transmembrane passes span 3-23 (LIMTILTITVALSLILATVSF), 56-76 (FFLVAILFLLFDLEIALLLPL), and 87-107 (GTFFWATTVLILLTLGLIYEW).

Belongs to the complex I subunit 3 family.

Its subcellular location is the mitochondrion membrane. The enzyme catalyses a ubiquinone + NADH + 5 H(+)(in) = a ubiquinol + NAD(+) + 4 H(+)(out). In terms of biological role, core subunit of the mitochondrial membrane respiratory chain NADH dehydrogenase (Complex I) that is believed to belong to the minimal assembly required for catalysis. Complex I functions in the transfer of electrons from NADH to the respiratory chain. The immediate electron acceptor for the enzyme is believed to be ubiquinone. The chain is NADH-ubiquinone oxidoreductase chain 3 (MT-ND3) from Cyprinus carpio (Common carp).